The primary structure comprises 151 residues: Ribosome maturation factor RimP (151 aa).

It belongs to the RimP family.

It localises to the cytoplasm. Its function is as follows. Required for maturation of 30S ribosomal subunits. The protein is Ribosome maturation factor RimP of Shewanella woodyi (strain ATCC 51908 / MS32).